The following is a 231-amino-acid chain: Large ribosomal subunit protein uL1 (231 aa).

This sequence belongs to the universal ribosomal protein uL1 family. Part of the 50S ribosomal subunit.

Functionally, binds directly to 23S rRNA. The L1 stalk is quite mobile in the ribosome, and is involved in E site tRNA release. Its function is as follows. Protein L1 is also a translational repressor protein, it controls the translation of the L11 operon by binding to its mRNA. This Azoarcus sp. (strain BH72) protein is Large ribosomal subunit protein uL1.